Here is a 309-residue protein sequence, read N- to C-terminus: Ribonuclease Z (309 aa).

Positions 63, 65, 67, 68, 141, 208, and 266 each coordinate Zn(2+). The active-site Proton acceptor is the Asp-67.

This sequence belongs to the RNase Z family. As to quaternary structure, homodimer. Zn(2+) serves as cofactor.

The enzyme catalyses Endonucleolytic cleavage of RNA, removing extra 3' nucleotides from tRNA precursor, generating 3' termini of tRNAs. A 3'-hydroxy group is left at the tRNA terminus and a 5'-phosphoryl group is left at the trailer molecule.. Zinc phosphodiesterase, which displays some tRNA 3'-processing endonuclease activity. Probably involved in tRNA maturation, by removing a 3'-trailer from precursor tRNA. The protein is Ribonuclease Z of Salinispora arenicola (strain CNS-205).